A 474-amino-acid chain; its full sequence is MKVTLPDFNKANVLVVGDVMLDRYWYGPTSRISPEAPVPVVKVDTIEERPGGAANVAMNIASLGANSRLVGLTGIDEAAKALSNTLSQVNVRCDFVSIATHPTITKLRVLSRNQQLIRLDFEEGFSNVSPEPIYERIQQALPSMGALILSDYAKGALSHVQQMIQLAKKAGVPVLIDPKGSDFERYRGATLLTPNMSEFEQVVGVCHTDDELVEKGTQLVKDLALDALLITRSERGMSLLQANEAPLHLPTQAQEVYDVTGAGDTVIGVLATALAAGKPLAEACFLANAAAGVVVGKLGTSTVSPIELENAIRGRADNGFGIMEESQLKQAVALARQRGERIVMTNGCFDILHAGHVSYLANARKLGDRLIVAVNSDASTKRLKGESRPVNPLEQRMTVLGALGAVDWVVAFEEDTPQRLIASVLPDILVKGGDYKPEDIAGSKEVWAAGGEVKVLNFEDGISTTNIINAIKKK.

The ribokinase stretch occupies residues 1 to 318 (MKVTLPDFNK…ENAIRGRADN (318 aa)). 195–198 (NMSE) contributes to the ATP binding site. The active site involves Asp264. The cytidylyltransferase stretch occupies residues 344 to 474 (MTNGCFDILH…TNIINAIKKK (131 aa)).

This sequence in the N-terminal section; belongs to the carbohydrate kinase PfkB family. The protein in the C-terminal section; belongs to the cytidylyltransferase family. As to quaternary structure, homodimer.

The catalysed reaction is D-glycero-beta-D-manno-heptose 7-phosphate + ATP = D-glycero-beta-D-manno-heptose 1,7-bisphosphate + ADP + H(+). It catalyses the reaction D-glycero-beta-D-manno-heptose 1-phosphate + ATP + H(+) = ADP-D-glycero-beta-D-manno-heptose + diphosphate. It participates in nucleotide-sugar biosynthesis; ADP-L-glycero-beta-D-manno-heptose biosynthesis; ADP-L-glycero-beta-D-manno-heptose from D-glycero-beta-D-manno-heptose 7-phosphate: step 1/4. It functions in the pathway nucleotide-sugar biosynthesis; ADP-L-glycero-beta-D-manno-heptose biosynthesis; ADP-L-glycero-beta-D-manno-heptose from D-glycero-beta-D-manno-heptose 7-phosphate: step 3/4. In terms of biological role, catalyzes the phosphorylation of D-glycero-D-manno-heptose 7-phosphate at the C-1 position to selectively form D-glycero-beta-D-manno-heptose-1,7-bisphosphate. Catalyzes the ADP transfer from ATP to D-glycero-beta-D-manno-heptose 1-phosphate, yielding ADP-D-glycero-beta-D-manno-heptose. The sequence is that of Bifunctional protein HldE from Proteus mirabilis (strain HI4320).